Reading from the N-terminus, the 398-residue chain is Tryptophan synthase beta chain (398 aa).

Lys92 is subject to N6-(pyridoxal phosphate)lysine.

This sequence belongs to the TrpB family. In terms of assembly, tetramer of two alpha and two beta chains. The cofactor is pyridoxal 5'-phosphate.

The catalysed reaction is (1S,2R)-1-C-(indol-3-yl)glycerol 3-phosphate + L-serine = D-glyceraldehyde 3-phosphate + L-tryptophan + H2O. The protein operates within amino-acid biosynthesis; L-tryptophan biosynthesis; L-tryptophan from chorismate: step 5/5. Its function is as follows. The beta subunit is responsible for the synthesis of L-tryptophan from indole and L-serine. The sequence is that of Tryptophan synthase beta chain from Nitrosospira multiformis (strain ATCC 25196 / NCIMB 11849 / C 71).